Here is a 247-residue protein sequence, read N- to C-terminus: Triosephosphate isomerase (247 aa).

Substrate is bound at residue 10–12 (NWK). Residue histidine 92 is the Electrophile of the active site. Residue glutamate 164 is the Proton acceptor of the active site. Substrate is bound by residues glycine 170, serine 209, and 230 to 231 (GG).

It belongs to the triosephosphate isomerase family. In terms of assembly, homodimer.

The protein resides in the cytoplasm. The enzyme catalyses D-glyceraldehyde 3-phosphate = dihydroxyacetone phosphate. The protein operates within carbohydrate biosynthesis; gluconeogenesis. It functions in the pathway carbohydrate degradation; glycolysis; D-glyceraldehyde 3-phosphate from glycerone phosphate: step 1/1. Involved in the gluconeogenesis. Catalyzes stereospecifically the conversion of dihydroxyacetone phosphate (DHAP) to D-glyceraldehyde-3-phosphate (G3P). The protein is Triosephosphate isomerase of Alcanivorax borkumensis (strain ATCC 700651 / DSM 11573 / NCIMB 13689 / SK2).